Here is a 460-residue protein sequence, read N- to C-terminus: Interleukin-6 receptor subunit alpha (460 aa).

A signal peptide spans methionine 1–alanine 19. An Ig-like C2-type domain is found at leucine 20–serine 116. Over leucine 20–proline 364 the chain is Extracellular. Intrachain disulfides connect cysteine 25–cysteine 190, cysteine 47–cysteine 92, cysteine 117–cysteine 128, and cysteine 162–cysteine 173. Asparagine 32 and asparagine 55 each carry an N-linked (GlcNAc...) asparagine glycan. Fibronectin type-III domains lie at proline 109–aspartate 214 and proline 215–isoleucine 313. An N-linked (GlcNAc...) asparagine glycan is attached at asparagine 150. N-linked (GlcNAc...) asparagine glycosylation occurs at asparagine 218. The short motif at tryptophan 300–serine 304 is the WSXWS motif element. Residues threonine 365 to leucine 385 form a helical membrane-spanning segment. Over arginine 386–arginine 460 the chain is Cytoplasmic.

It belongs to the type I cytokine receptor family. Type 3 subfamily. In terms of assembly, component of a hexamer of two molecules each of IL6, IL6R and IL6ST; first binds to IL6 to associate with the signaling subunit IL6ST. Interacts (via N-terminal ectodomain) with SORL1; this interaction may affect IL6-binding to IL6R, hence decrease IL6 'classic-signaling'. As to quaternary structure, also interacts with SORL1; this interaction leads to soluble IL6R internalization. May form a trimeric complex with the soluble SORL1 ectodomain and circulating IL6 receptor; this interaction might stabilize circulating IL6, hence promote IL6 'trans-signaling'. In terms of processing, a short soluble form is also released from the membrane by proteolysis. The sIL6R is formed by limited proteolysis of membrane-bound receptors, a process referred to as ectodomain shedding. mIL6R is cleaved by the proteases ADAM10 and ADAM17. Post-translationally, glycosylated. Glycosylation is dispensable for transport, signaling, and cell-surface turnover. Glycosylation at Asn-55 is a protease-regulatory exosite. Glycosylation is required for ADAM17-mediated proteolysis. As to expression, expressed by dendritic cells. Detected in the cerebrospinal fluid.

It is found in the cell membrane. Its subcellular location is the secreted. With respect to regulation, classic and trans-signaling are both inhibited by tocilizumab, a humanized monoclonal antibody that blocks interleukin IL6R signaling. Functionally, part of the receptor for interleukin 6. Binds to IL6 with low affinity, but does not transduce a signal. Signal activation necessitate an association with IL6ST. Activation leads to the regulation of the immune response, acute-phase reactions and hematopoiesis. The interaction with membrane-bound IL6R and IL6ST stimulates 'classic signaling', the restricted expression of the IL6R limits classic IL6 signaling to only a few tissues such as the liver and some cells of the immune system. Whereas the binding of IL6 and soluble IL6R to IL6ST stimulates 'trans-signaling'. Alternatively, 'cluster signaling' occurs when membrane-bound IL6:IL6R complexes on transmitter cells activate IL6ST receptors on neighboring receiver cells. In terms of biological role, signaling via the membrane-bound IL6R is mostly regenerative and anti-inflammatory. Drives naive CD4(+) T cells to the Th17 lineage, through 'cluster signaling' by dendritic cells. Soluble form of IL6 receptor (sIL6R) that acts as an agonist of IL6 activity. The IL6:sIL6R complex (hyper-IL6) binds to IL6ST/gp130 on cell surfaces and induces signaling also on cells that do not express membrane-bound IL6R in a process called IL6 'trans-signaling'. sIL6R is causative for the pro-inflammatory properties of IL6 and an important player in the development of chronic inflammatory diseases. In complex with IL6, is required for induction of VEGF production. Plays a protective role during liver injury, being required for maintenance of tissue regeneration. 'Trans-signaling' in central nervous system regulates energy and glucose homeostasis. In Mus musculus (Mouse), this protein is Interleukin-6 receptor subunit alpha.